A 164-amino-acid chain; its full sequence is Interferon gamma (164 aa).

Positions 1–19 are cleaved as a signal peptide; the sequence is MTCQTYNLFVLSVIMIYYG. Asparagine 42 and asparagine 61 each carry an N-linked (GlcNAc...) asparagine glycan.

The protein belongs to the type II (or gamma) interferon family. Homodimer.

The protein resides in the secreted. Produced by lymphocytes activated by specific antigens or mitogens. IFN-gamma, in addition to having antiviral activity, has important immunoregulatory functions. It is a potent activator of macrophages, it has antiproliferative effects on transformed cells and it can potentiate the antiviral and antitumor effects of the type I interferons. The polypeptide is Interferon gamma (IFNG) (Coturnix japonica (Japanese quail)).